The primary structure comprises 609 residues: Cell division protein DipM (609 aa).

Residues 1–24 (MRQLWTQAAVIALTAGTLGAPAHA) form the signal peptide. The tract at residues 21-103 (PAHASGQSGQ…PVLRATPPRT (83 aa)) is disordered. Positions 25–38 (SGQSGQRFTPNFPI) are enriched in polar residues. Over residues 79-93 (LPPPAPVSTPAPAPQ) the composition is skewed to pro residues. LysM domains follow at residues 121–165 (QVRV…KIKG) and 171–215 (KAYV…KLLL). 2 stretches are compositionally biased toward low complexity: residues 242 to 258 (AEPAPATTRPATPAATP) and 265 to 280 (PVSEETSEPATTSTTT). Positions 242-280 (AEPAPATTRPATPAATPSRPVRQPVSEETSEPATTSTTT) are disordered. 2 consecutive LysM domains span residues 295-339 (QVHT…KIKG) and 345-389 (KAYS…KIAL). The tract at residues 389–457 (LPDGFRDKGP…AAQPITPPPS (69 aa)) is disordered. Residues 400-429 (RTTTTTRPATPPANTYARVDSSAAAASTPS) are compositionally biased toward low complexity. The tract at residues 503–603 (NDGLNIRAPQ…VKDKAKPVDP (101 aa)) is lytM.

It is found in the periplasm. Required for efficient cell division, cell polarity and normal cell morphology. Facilitates remodeling of the peptidoglycan layer and, thus, coordinated constriction of the cell envelope during the division process. Plays a critical role in maintaining proper cell envelope architecture during growth and division. Required for normal envelope invagination during cell division and to establish or maintain outer membrane connections throughout the cell envelope. May serve as a regulatory hub coordinating the activities of multiple peptidoglycan-degrading enzymes during cell constriction. Required to position SdpA and SdpB at midcell. This chain is Cell division protein DipM, found in Caulobacter vibrioides (strain NA1000 / CB15N) (Caulobacter crescentus).